The following is a 1905-amino-acid chain: von Willebrand factor A domain-containing protein 8 (1905 aa).

The transit peptide at 1–45 (MQSRLLLLGAPGGLGDVASRRVRLLLRQVLRGRPGGDQQRLEVRL) directs the protein to the mitochondrion. An interaction with PEX7 region spans residues 1-260 (MQSRLLLLGA…PLDPPLRSRF (260 aa)). Position 446–453 (446–453 (GGKGCGKT)) interacts with ATP. Over residues 1541–1560 (ERDSNEDVSDPKHGKEDPDN) the composition is skewed to basic and acidic residues. Residues 1541–1583 (ERDSNEDVSDPKHGKEDPDNMPHVGGNTWAGGTGGRDTAGLGG) are disordered. Residues 1568-1583 (TWAGGTGGRDTAGLGG) show a composition bias toward gly residues. A VWFA domain is found at 1714–1896 (RLRLVVDVSG…KKIPQILQQI (183 aa)).

In terms of assembly, monomer. Interacts with PEX7. Interacts with PEX5 in a PEX7-dependent manner. In terms of tissue distribution, isoform 1 is predominantly expressed in liver, kidney, pancreas, heart, and skeletal muscle (at protein level).

It is found in the mitochondrion. Functionally, exhibits ATPase activity in vitro. The protein is von Willebrand factor A domain-containing protein 8 (Vwa8) of Mus musculus (Mouse).